The sequence spans 444 residues: Mitogen-activated protein kinase mpk-1 (444 aa).

Composition is skewed to polar residues over residues 1 to 17 (MPTWIPNNLCAQPTTRN) and 24 to 56 (GHPQATQQQSAPGSLAYRNSSNIPNGATNHVRQ). The segment at 1-56 (MPTWIPNNLCAQPTTRNAKPPSNGHPQATQQQSAPGSLAYRNSSNIPNGATNHVRQ) is disordered. A Protein kinase domain is found at 96-384 (YVNLSYIGEG…IEQALAHPYL (289 aa)). Residues 102–110 (IGEGAYGMV) and K125 contribute to the ATP site. The Proton acceptor role is filled by D220. T256 is subject to Phosphothreonine. The short motif at 256–258 (TEY) is the TXY element. Phosphotyrosine is present on Y258.

This sequence belongs to the protein kinase superfamily. CMGC Ser/Thr protein kinase family. MAP kinase subfamily. As to quaternary structure, isoform a interacts with gck-1 (via N-terminus). The cofactor is Mg(2+). Post-translationally, isoform a is phosphorylated at the pachytene stage during oogenesis and is negatively regulated by gck-1. Isoform b is phosphorylated in proximal oocytes. As to expression, expressed in cells lining the rectum. Isoform a is expressed in nervous system, body wall muscles and posterior intestine. Isoform b expression may be restricted to germline.

It carries out the reaction L-seryl-[protein] + ATP = O-phospho-L-seryl-[protein] + ADP + H(+). It catalyses the reaction L-threonyl-[protein] + ATP = O-phospho-L-threonyl-[protein] + ADP + H(+). With respect to regulation, activated by dual phosphorylation at Thr-256 and Tyr-258. May be inactivated by lip-1-mediated dephosphorylation. Functionally, functions in let-60 Ras signaling pathway; acts downstream of lin-45 raf kinase, but before the lin-1 gene product in controlling vulval cell differentiation. Plays a negative role in proximal germline proliferation in the mitotic zone. Required for progression of developing oocytes through the pachytene stage, perhaps acting after efl-1/dpl-1-mediated gene activation and before gld-1 down-regulation. May play a role in global X chromosome reactivation or be indirectly required for progression of germ cells through meiosis to the point where X reactivation occurs. In oocytes, inhibits the activity of the chloride channel clh-3, likely by activating gck-3. Plays a role in response to M.nematophilum-mediated bacterial infection by promoting tail swelling and preventing constipation. Involved in fluid homeostasis. In addition, involved in the up-regulation of lysozyme ilys-3 expression in the intestine in responses to M.nematophilum-mediated bacterial infection. By phosphorylating transcription factor skn-1 (isoform c) may play a role in increasing life span downstream of lin-45, let-60 and mek-2. By up-regulating cep-1 and down-regulating gld-1 expression in the late pachytene stage, plays a role in germline apoptosis in response to DNA damage. Regulates egl-1 expression in response to DNA damage, probably upstream of cep-1. Suppresses germline tumor formation by preventing the dedifferentiation of secondary spermatocytes probably upstream of rskn-1. This Caenorhabditis elegans protein is Mitogen-activated protein kinase mpk-1 (mpk-1).